The primary structure comprises 684 residues: Proprotein convertase subtilisin/kexin type 9 (684 aa).

The N-terminal stretch at Met1 to Ala28 is a signal peptide. The propeptide occupies Gln29–Gln151. Residue Tyr36 is modified to Sulfotyrosine. Ser45 carries the post-translational modification Phosphoserine. The Inhibitor I9 domain maps to Thr75–Val148. The Peptidase S8 domain occupies Pro154–Trp460. Residues Asp185 and His225 each act as charge relay system in the active site. Intrachain disulfides connect Cys222–Cys254 and Cys322–Cys357. Residue Ser385 is the Charge relay system of the active site. A C-terminal domain region spans residues Gly451–Ala684. Disulfide bonds link Cys456–Cys526, Cys476–Cys525, and Cys485–Cys508. A glycan (N-linked (GlcNAc...) asparagine) is linked at Asn532. Cystine bridges form between Cys533/Cys600, Cys551/Cys599, Cys561/Cys587, Cys607/Cys678, Cys625/Cys677, and Cys634/Cys653.

This sequence belongs to the peptidase S8 family. In terms of assembly, monomer. Can self-associate to form dimers and higher multimers which may have increased LDLR degrading activity. The precursor protein but not the mature protein may form multimers. Interacts with APOB, VLDLR, LRP8/APOER2 and BACE1. The full-length immature form (pro-PCSK9) interacts with SCNN1A, SCNN1B and SCNN1G. The pro-PCSK9 form (via C-terminal domain) interacts with LDLR. Interacts (via the C-terminal domain) with ANXA2 (via repeat Annexin 1); the interaction inhibits the degradation of LDLR. The cofactor is Ca(2+). In terms of processing, cleavage by furin and PCSK5 generates a truncated inactive protein that is unable to induce LDLR degradation. Post-translationally, undergoes autocatalytic cleavage in the endoplasmic reticulum to release the propeptide from the N-terminus and the cleavage of the propeptide is strictly required for its maturation and activation. The cleaved propeptide however remains associated with the catalytic domain through non-covalent interactions, preventing potential substrates from accessing its active site. As a result, it is secreted from cells as a propeptide-containing, enzymatically inactive protein. Phosphorylation protects the propeptide against proteolysis.

The protein localises to the cytoplasm. It is found in the secreted. It localises to the endosome. Its subcellular location is the lysosome. The protein resides in the cell surface. The protein localises to the endoplasmic reticulum. It is found in the golgi apparatus. Its proteolytic activity is autoinhibited by the non-covalent binding of the propeptide to the catalytic domain. Inhibited by EGTA. In terms of biological role, crucial player in the regulation of plasma cholesterol homeostasis. Binds to low-density lipid receptor family members: low density lipoprotein receptor (LDLR), very low density lipoprotein receptor (VLDLR), apolipoprotein E receptor (LRP1/APOER) and apolipoprotein receptor 2 (LRP8/APOER2), and promotes their degradation in intracellular acidic compartments. Acts via a non-proteolytic mechanism to enhance the degradation of the hepatic LDLR through a clathrin LDLRAP1/ARH-mediated pathway. May prevent the recycling of LDLR from endosomes to the cell surface or direct it to lysosomes for degradation. Can induce ubiquitination of LDLR leading to its subsequent degradation. Inhibits intracellular degradation of APOB via the autophagosome/lysosome pathway in a LDLR-independent manner. Involved in the disposal of non-acetylated intermediates of BACE1 in the early secretory pathway. Inhibits epithelial Na(+) channel (ENaC)-mediated Na(+) absorption by reducing ENaC surface expression primarily by increasing its proteasomal degradation. Regulates neuronal apoptosis via modulation of LRP8/APOER2 levels and related anti-apoptotic signaling pathways. The protein is Proprotein convertase subtilisin/kexin type 9 (PCSK9) of Plecturocebus moloch (Dusky titi monkey).